The following is a 194-amino-acid chain: Ribosome maturation factor RimM (194 aa).

Positions 92 to 190 constitute a PRC barrel domain; it reads DDGYYDHELI…ALVVTPPEGL (99 aa).

It belongs to the RimM family. Binds ribosomal protein uS19.

The protein localises to the cytoplasm. Its function is as follows. An accessory protein needed during the final step in the assembly of 30S ribosomal subunit, possibly for assembly of the head region. Essential for efficient processing of 16S rRNA. May be needed both before and after RbfA during the maturation of 16S rRNA. It has affinity for free ribosomal 30S subunits but not for 70S ribosomes. The protein is Ribosome maturation factor RimM of Corynebacterium urealyticum (strain ATCC 43042 / DSM 7109).